Consider the following 268-residue polypeptide: Uronate dehydrogenase (268 aa).

NAD(+)-binding positions include 17–18 (GL), 37–39 (DIS), 55–56 (DL), and 75–79 (FGGVS). Substrate contacts are provided by residues Ser-79 and 115 to 117 (SNH). The active-site Proton acceptor is the Tyr-140. Lys-144 lines the NAD(+) pocket. Ser-169 contributes to the substrate binding site. Ser-170 provides a ligand contact to NAD(+). Arg-178 contacts substrate.

The protein belongs to the NAD(P)-dependent epimerase/dehydratase family. In terms of assembly, homohexamer.

It catalyses the reaction beta-D-galacturonate + NAD(+) = D-galactaro-1,5-lactone + NADH + H(+). It carries out the reaction beta-D-glucuronate + NAD(+) = D-glucaro-1,5-lactone + NADH + H(+). It participates in carbohydrate acid metabolism; D-galacturonate degradation via prokaryotic oxidative pathway. In terms of biological role, catalyzes the oxidation of beta-D-galacturonate and beta-D-glucuronate to galactarate and D-glucarate, respectively. The chain is Uronate dehydrogenase (udh) from Pseudomonas putida (strain ATCC 47054 / DSM 6125 / CFBP 8728 / NCIMB 11950 / KT2440).